The sequence spans 635 residues: MSKVIGIDLGTTNSCVAIMEGGEPIVIANAEGSRTTPSMVAITDSGERLVGQQAKRQAVTNPENTLFAIKRLIGRKFDSEAVKKDIAISPFKIVKADNGDAWVEVRGQKYSAPEISAMVLQKMKKTAEDYLGETVTDAVITVPAYFDDSQRQATKDAGKIAGLNVLRIINEPTAAALAYGLDKKKDEKIAVFDLGGGTFDISILELGEGVFEVKSTNGDTFLGGEDFDQDIIDWIAAEFKKDQGIDLRGDKMALQRLKEAAEKAKCELSTSLETDINLPFITADATGPKHLNLKLTRAKLEAICANLIAKLEGPCRTALKDAGLSPNDIDEVILVGGMTRMPIVQKKVQDIFGKVPNRSVNPDEVVAIGAAIQGGVLRGDVKDVLLLDVTPLSLGIETLGGVMTRLIEKNATIPCRKSQIFSTAADNQPAVSIHVLQGEREMSTDNKTLGNFELSGIPPAPRGVPQIEVTFDIDANGIVHVSAKDLGTGKEQSIRITASSGLSKEEIDKMVKDAEAHSSEDKKKRELIEARNQADSLAYSTEKSLKEFGDKIDAAEKQKIEDGLAALKKAMEGSDADAIKKASDELMQASHKLAEAVYAKAQPGEEQAGGAPHEGEAKDEKVVDADFEEVKEDKK.

At threonine 198 the chain carries Phosphothreonine; by autocatalysis. The tract at residues 598–635 (YAKAQPGEEQAGGAPHEGEAKDEKVVDADFEEVKEDKK) is disordered. Positions 613-624 (HEGEAKDEKVVD) are enriched in basic and acidic residues. Residues 625–635 (ADFEEVKEDKK) are compositionally biased toward acidic residues.

Belongs to the heat shock protein 70 family.

Acts as a chaperone. The protein is Chaperone protein DnaK of Geotalea uraniireducens (strain Rf4) (Geobacter uraniireducens).